A 544-amino-acid chain; its full sequence is Elongator complex protein 3 (544 aa).

The Radical SAM core domain maps to 79–369 (RTASGIAVVA…YRIQRDIPMP (291 aa)). 3 residues coordinate [4Fe-4S] cluster: Cys-96, Cys-106, and Cys-109. Acetyl-CoA is bound by residues Lys-161, 472–475 (ELHV), 495–497 (FGT), and Tyr-528. Residues 393–544 (TKCRDIRARE…LDGPYMSKWL (152 aa)) form the N-acetyltransferase domain.

This sequence belongs to the ELP3 family. As to quaternary structure, component of the elongator complex. It depends on [4Fe-4S] cluster as a cofactor.

The protein resides in the cytoplasm. The catalysed reaction is uridine(34) in tRNA + acetyl-CoA + S-adenosyl-L-methionine + H2O = 5-(carboxymethyl)uridine(34) in tRNA + 5'-deoxyadenosine + L-methionine + CoA + 2 H(+). The protein operates within tRNA modification; 5-methoxycarbonylmethyl-2-thiouridine-tRNA biosynthesis. Its function is as follows. Catalytic tRNA acetyltransferase subunit of the elongator complex which is required for multiple tRNA modifications, including mcm5U (5-methoxycarbonylmethyl uridine), mcm5s2U (5-methoxycarbonylmethyl-2-thiouridine), and ncm5U (5-carbamoylmethyl uridine). In the elongator complex, acts as a tRNA uridine(34) acetyltransferase, which mediates formation of carboxymethyluridine in the wobble base at position 34 in tRNAs. The sequence is that of Elongator complex protein 3 from Schizosaccharomyces pombe (strain 972 / ATCC 24843) (Fission yeast).